A 511-amino-acid chain; its full sequence is Histidine ammonia-lyase 2 (511 aa).

A cross-link (5-imidazolinone (Ser-Gly)) is located at residues 144–146 (SSG). Position 145 is a 2,3-didehydroalanine (Ser) (S145).

The protein belongs to the PAL/histidase family. In terms of processing, contains an active site 4-methylidene-imidazol-5-one (MIO), which is formed autocatalytically by cyclization and dehydration of residues Ser-Ser-Gly.

The protein localises to the cytoplasm. The catalysed reaction is L-histidine = trans-urocanate + NH4(+). The protein operates within amino-acid degradation; L-histidine degradation into L-glutamate; N-formimidoyl-L-glutamate from L-histidine: step 1/3. The polypeptide is Histidine ammonia-lyase 2 (hutH2) (Fusobacterium nucleatum subsp. nucleatum (strain ATCC 25586 / DSM 15643 / BCRC 10681 / CIP 101130 / JCM 8532 / KCTC 2640 / LMG 13131 / VPI 4355)).